A 63-amino-acid polypeptide reads, in one-letter code: Putative antitoxin AF_1084 (63 aa).

Belongs to the UPF0165 family.

Possibly the antitoxin component of a type II toxin-antitoxin (TA) system. This chain is Putative antitoxin AF_1084, found in Archaeoglobus fulgidus (strain ATCC 49558 / DSM 4304 / JCM 9628 / NBRC 100126 / VC-16).